Consider the following 439-residue polypeptide: 23S rRNA (uracil(1939)-C(5))-methyltransferase RlmD (439 aa).

The TRAM domain maps to 10–69; that stretch reads KTQLNTRHQAVQVERLDHHGAGIAYLKKKPLFIDGALPGEEVVTQLVEEKSKFARGKLIK. 4 residues coordinate [4Fe-4S] cluster: C82, C88, C91, and C169. 6 residues coordinate S-adenosyl-L-methionine: Q272, F301, N306, E322, N349, and D370. The Nucleophile role is filled by C396.

It belongs to the class I-like SAM-binding methyltransferase superfamily. RNA M5U methyltransferase family. RlmD subfamily.

It catalyses the reaction uridine(1939) in 23S rRNA + S-adenosyl-L-methionine = 5-methyluridine(1939) in 23S rRNA + S-adenosyl-L-homocysteine + H(+). In terms of biological role, catalyzes the formation of 5-methyl-uridine at position 1939 (m5U1939) in 23S rRNA. This chain is 23S rRNA (uracil(1939)-C(5))-methyltransferase RlmD, found in Vibrio campbellii (strain ATCC BAA-1116).